A 290-amino-acid chain; its full sequence is 33 kDa chaperonin (290 aa).

Disulfide bonds link Cys-235-Cys-237 and Cys-268-Cys-271.

This sequence belongs to the HSP33 family. Post-translationally, under oxidizing conditions two disulfide bonds are formed involving the reactive cysteines. Under reducing conditions zinc is bound to the reactive cysteines and the protein is inactive.

Its subcellular location is the cytoplasm. Its function is as follows. Redox regulated molecular chaperone. Protects both thermally unfolding and oxidatively damaged proteins from irreversible aggregation. Plays an important role in the bacterial defense system toward oxidative stress. The sequence is that of 33 kDa chaperonin from Streptococcus pneumoniae (strain CGSP14).